The primary structure comprises 544 residues: Chaperonin GroEL (544 aa).

ATP-binding positions include 29–32, 86–90, glycine 413, 476–478, and aspartate 492; these read TLGP, DGTTT, and NAA.

It belongs to the chaperonin (HSP60) family. As to quaternary structure, forms a cylinder of 14 subunits composed of two heptameric rings stacked back-to-back. Interacts with the co-chaperonin GroES.

It is found in the cytoplasm. The enzyme catalyses ATP + H2O + a folded polypeptide = ADP + phosphate + an unfolded polypeptide.. Functionally, together with its co-chaperonin GroES, plays an essential role in assisting protein folding. The GroEL-GroES system forms a nano-cage that allows encapsulation of the non-native substrate proteins and provides a physical environment optimized to promote and accelerate protein folding. The sequence is that of Chaperonin GroEL from Bacillus cereus (strain B4264).